Here is a 335-residue protein sequence, read N- to C-terminus: Acetyl-coenzyme A carboxylase carboxyl transferase subunit alpha (335 aa).

One can recognise a CoA carboxyltransferase C-terminal domain in the interval 40 to 294; sequence QLETLAARRR…KEAIEKHLNA (255 aa).

It belongs to the AccA family. Acetyl-CoA carboxylase is a heterohexamer composed of biotin carboxyl carrier protein (AccB), biotin carboxylase (AccC) and two subunits each of ACCase subunit alpha (AccA) and ACCase subunit beta (AccD).

It is found in the cytoplasm. It carries out the reaction N(6)-carboxybiotinyl-L-lysyl-[protein] + acetyl-CoA = N(6)-biotinyl-L-lysyl-[protein] + malonyl-CoA. It functions in the pathway lipid metabolism; malonyl-CoA biosynthesis; malonyl-CoA from acetyl-CoA: step 1/1. Its function is as follows. Component of the acetyl coenzyme A carboxylase (ACC) complex. First, biotin carboxylase catalyzes the carboxylation of biotin on its carrier protein (BCCP) and then the CO(2) group is transferred by the carboxyltransferase to acetyl-CoA to form malonyl-CoA. In Prochlorococcus marinus (strain MIT 9215), this protein is Acetyl-coenzyme A carboxylase carboxyl transferase subunit alpha.